The chain runs to 169 residues: Probable phospholipid hydroperoxide glutathione peroxidase (169 aa).

The active site involves Cys-43.

It belongs to the glutathione peroxidase family.

The protein localises to the cytoplasm. It catalyses the reaction a hydroperoxy polyunsaturated fatty acid + 2 glutathione = a hydroxy polyunsaturated fatty acid + glutathione disulfide + H2O. Protects cells and enzymes from oxidative damage, by catalyzing the reduction of hydrogen peroxide, lipid peroxides and organic hydroperoxide, by glutathione. The polypeptide is Probable phospholipid hydroperoxide glutathione peroxidase (Nicotiana tabacum (Common tobacco)).